The chain runs to 1254 residues: Structural polyprotein (1254 aa).

The tract at residues 43–77 (LQAQQMQQLISAVSALTTKQNVKAPKGQRQKKQQK) is host transcription inhibition. Residues 60 to 113 (TKQNVKAPKGQRQKKQQKPKEKKENQKKKPTQKKKQQQKPKPQAKKKKPGRRER) form a disordered region. Residues 70-108 (QRQKKQQKPKEKKENQKKKPTQKKKQQQKPKPQAKKKKP) carry the Nuclear localization signal motif. The span at 84–110 (NQKKKPTQKKKQQQKPKPQAKKKKPGR) shows a compositional bias: basic residues. The tract at residues 95 to 123 (QQQKPKPQAKKKKPGRRERMCMKIENDCI) is binding to the viral RNA. Residues 108 to 122 (PGRRERMCMKIENDC) are ribosome-binding. The cysteines at positions 122 and 137 are disulfide-linked. The region spanning 122-270 (CIFEVKLDGK…RVTPEGTEEW (149 aa)) is the Peptidase S3 domain. H148 acts as the Charge relay system in catalysis. The Nuclear export signal motif lies at 153-163 (IDNPDLAKLTY). The tract at residues 164 to 169 (KKSSKY) is interaction with spike glycoprotein E2. The active-site Charge relay system is D170. Residues 192-202 (PEGHYNWHHGA) form a dimerization of the capsid protein region. S222 acts as the Charge relay system in catalysis. Residues 228–232 (DNKGR) are dimerization of the capsid protein. The interval 271-282 (SAALMMCILANT) is functions as an uncleaved signal peptide for the precursor of protein E3/E2. At 271–694 (SAALMMCILA…PHEIIQYYYG (424 aa)) the chain is on the extracellular side. 3 disulfide bridges follow: C277–C286, C291–C295, and C294–C326. N-linked (GlcNAc...) asparagine; by host glycosylation is present at N281. The N-linked (GlcNAc...) asparagine; by host glycan is linked to N328. 6 disulfide bridges follow: C353/C459, C356/C362, C425/C439, C487/C599, C535/C559, and C537/C554. 2 interaction with host Mxra8 receptor regions span residues 360–363 (YFCY) and 396–398 (HAH). The tract at residues 518–521 (TAGN) is interaction with host Mxra8 receptor. The N-linked (GlcNAc...) asparagine; by host glycan is linked to N534. The interval 550–556 (TINTCKI) is interaction with host Mxra8 receptor. N-linked (GlcNAc...) asparagine; by host glycosylation occurs at N596. A helical membrane pass occupies residues 695–715 (LYPAATIAAVSGASLMALLTL). At 716–756 (AATCCMLATARRKCLTPYALTPGAVVPLTLGLLCCAPRANA) the chain is on the cytoplasmic side. C719 carries S-palmitoyl cysteine; by host lipidation. An interaction with the capsid protein region spans residues 724–728 (TARRK). Residues C729, C749, and C750 are each lipidated (S-palmitoyl cysteine; by host). Residues 729 to 749 (CLTPYALTPGAVVPLTLGLLC) form a transient transmembrane before p62-6K protein processing region. A disulfide bridge connects residues C729 and C750. Residues 757-771 (ASFAETMAYLWDENK) are Extracellular-facing. The helical transmembrane segment at 772–792 (TLFWMEFAAPAAALALLACCI) threads the bilayer. Residue K793 is a topological domain, cytoplasmic. A helical membrane pass occupies residues 794 to 814 (SLICCCKPFSFLVLLSLGASA). At 815–1231 (KAYEHTATIP…AMTWVQRLAS (417 aa)) the chain is on the extracellular side. 4 cysteine pairs are disulfide-bonded: C865/C930, C878/C910, C879/C912, and C884/C894. The interval 900-917 (VYPFMWGGAYCFCDSENT) is E1 fusion peptide loop. Residue N957 is glycosylated (N-linked (GlcNAc...) asparagine; by host). 4 disulfides stabilise this stretch: C1075–C1087, C1117–C1192, C1122–C1196, and C1144–C1186. The chain crosses the membrane as a helical span at residues 1232-1252 (GLGGLALIAVVVLVLVTCITM). Residue C1249 is the site of S-palmitoyl cysteine; by host attachment. The S-stearoyl cysteine; by host moiety is linked to residue C1249. Topologically, residues 1253 to 1254 (RR) are cytoplasmic.

As to quaternary structure, homodimer. Homomultimer. Interacts with host karyopherin KPNA4; this interaction allows the nuclear import of the viral capsid protein. Interacts with spike glycoprotein E2. Interacts with host IRAK1; the interaction leads to inhibition of IRAK1-dependent signaling. In terms of assembly, the precursor of protein E3/E2 and E1 form a heterodimer shortly after synthesis. Interacts with spike glycoprotein E2. The precursor of protein E3/E2 and E1 form a heterodimer shortly after synthesis. Processing of the precursor of protein E3/E2 into E2 and E3 results in a heterodimer of the spike glycoproteins E2 and E1. Spike at virion surface are constituted of a trimer of E2-E1 heterodimers. After target cell attachment and endocytosis, E1 change conformation to form homotrimers. Interacts with 6K protein. E1/E2 heterodimer interacts with host LDLR. As to quaternary structure, interacts with spike glycoprotein E1. Processing of the precursor of protein E3/E2 into E2 and E3 results in a heterodimer of the spike glycoproteins E2 and E1. Spike at virion surface are constituted of a trimer of E2-E1 heterodimers. Interacts with 6K protein. Interacts with host MXRA8; this interaction mediates virus entry. In terms of assembly, oligomer. Interacts with spike glycoprotein E1. Interacts with spike glycoprotein E2. In terms of processing, structural polyprotein: Specific enzymatic cleavages in vivo yield mature proteins. Capsid protein is auto-cleaved during polyprotein translation, unmasking a signal peptide at the N-terminus of the precursor of E3/E2. The remaining polyprotein is then targeted to the host endoplasmic reticulum, where host signal peptidase cleaves it into pE2, 6K and E1 proteins. pE2 is further processed to mature E3 and E2 by host furin in trans-Golgi vesicle. Palmitoylated via thioester bonds. These palmitoylations may induce disruption of the C-terminus transmembrane. This would result in the reorientation of E2 C-terminus from lumenal to cytoplasmic side. Post-translationally, N-glycosylated. In terms of processing, palmitoylated via thioester bonds.

Its subcellular location is the virion. It is found in the host cytoplasm. It localises to the host cell membrane. The protein resides in the host nucleus. The protein localises to the virion membrane. Its subcellular location is the host Golgi apparatus. It is found in the host trans-Golgi network. It localises to the host endoplasmic reticulum. The enzyme catalyses Autocatalytic release of the core protein from the N-terminus of the togavirus structural polyprotein by hydrolysis of a -Trp-|-Ser- bond.. Its function is as follows. Forms an icosahedral capsid with a T=4 symmetry composed of 240 copies of the capsid protein surrounded by a lipid membrane through which penetrate 80 spikes composed of trimers of E1-E2 heterodimers. The capsid protein binds to the viral RNA genome at a site adjacent to a ribosome binding site for viral genome translation following genome release. Possesses a protease activity that results in its autocatalytic cleavage from the nascent structural protein. Following its self-cleavage, the capsid protein transiently associates with ribosomes, and within several minutes the protein binds to viral RNA and rapidly assembles into icosahedric core particles. The resulting nucleocapsid eventually associates with the cytoplasmic domain of the spike glycoprotein E2 at the cell membrane, leading to budding and formation of mature virions. In case of infection, new virions attach to target cells and after clathrin-mediated endocytosis their membrane fuses with the host endosomal membrane. This leads to the release of the nucleocapsid into the cytoplasm, followed by an uncoating event necessary for the genomic RNA to become accessible. The uncoating might be triggered by the interaction of capsid proteins with ribosomes. Binding of ribosomes would release the genomic RNA since the same region is genomic RNA-binding and ribosome-binding. Specifically inhibits interleukin-1 receptor-associated kinase 1/IRAK1-dependent signaling during viral entry, representing a means by which the alphaviruses may evade innate immune detection and activation prior to viral gene expression. In terms of biological role, provides the signal sequence for the translocation of the precursor of protein E3/E2 to the host endoplasmic reticulum. Furin-cleaved E3 remains associated with spike glycoprotein E1 and mediates pH protection of the latter during the transport via the secretory pathway. After virion release from the host cell, the assembly protein E3 is gradually released in the extracellular space. Plays a role in viral attachment to target host cell, by binding to the cell receptor MXRA8. The host LDLR may also act as a cell receptor for viral entry. Synthesized as a p62 precursor which is processed by furin at the cell membrane just before virion budding, giving rise to E2-E1 heterodimer. The p62-E1 heterodimer is stable, whereas E2-E1 is unstable and dissociate at low pH. p62 is processed at the last step, presumably to avoid E1 fusion activation before its final export to cell surface. E2 C-terminus contains a transitory transmembrane that would be disrupted by palmitoylation, resulting in reorientation of the C-terminal tail from lumenal to cytoplasmic side. This step is critical since E2 C-terminus is involved in budding by interacting with capsid proteins. This release of E2 C-terminus in cytoplasm occurs lately in protein export, and precludes premature assembly of particles at the endoplasmic reticulum membrane. Functionally, acts as a viroporin that participates in virus glycoprotein processing and transport to the plasma membrane, cell permeabilization and budding of viral particles. The cation channel is permeable to Na(+)&gt;K(+)&gt;Ca(2+) in vitro. Disrupts the calcium homeostasis of the cell, probably at the endoplasmic reticulum level. This leads to cytoplasmic calcium elevation. Because of its lipophilic properties, the 6K protein is postulated to influence the selection of lipids that interact with the transmembrane domains of the glycoproteins, which, in turn, affects the deformability of the bilayer required for the extreme curvature that occurs as budding proceeds. Present in low amount in virions, about 3% compared to viral glycoproteins. Its function is as follows. Class II viral fusion protein. Fusion activity is inactive as long as E1 is bound to E2 in mature virion. After virus attachment to target cell via host MXRA8 and endocytosis, acidification of the endosome induce dissociation of E1/E2 heterodimer and concomitant trimerization of the E1 subunits. This E1 trimer is fusion active, and promotes release of viral nucleocapsid in cytoplasm after endosome and viral membrane fusion. Efficient fusion requires the presence of cholesterol and sphingolipid in the target membrane. In Aedes (Common banded mosquito), this protein is Structural polyprotein.